Consider the following 127-residue polypeptide: Large ribosomal subunit protein bL12 (127 aa).

It belongs to the bacterial ribosomal protein bL12 family. Homodimer. Part of the ribosomal stalk of the 50S ribosomal subunit. Forms a multimeric L10(L12)X complex, where L10 forms an elongated spine to which 2 to 4 L12 dimers bind in a sequential fashion. Binds GTP-bound translation factors.

Forms part of the ribosomal stalk which helps the ribosome interact with GTP-bound translation factors. Is thus essential for accurate translation. This chain is Large ribosomal subunit protein bL12, found in Rhizobium etli (strain ATCC 51251 / DSM 11541 / JCM 21823 / NBRC 15573 / CFN 42).